The following is a 619-amino-acid chain: Putative zinc metalloprotease CT_072 (619 aa).

His-20 contacts Zn(2+). Glu-21 is an active-site residue. Residue His-24 coordinates Zn(2+). 3 consecutive transmembrane segments (helical) span residues 103–125 (IFVLAAGPLANLLVAIFVFGILY), 558–580 (VLNLLPIPVLDGGYILLCLWEIL), and 593–610 (ALVPFMILLVLFFVFLTL).

It belongs to the peptidase M50B family. Zn(2+) is required as a cofactor.

The protein localises to the cell inner membrane. This chain is Putative zinc metalloprotease CT_072, found in Chlamydia trachomatis serovar D (strain ATCC VR-885 / DSM 19411 / UW-3/Cx).